A 166-amino-acid polypeptide reads, in one-letter code: Eukaryotic translation initiation factor 5A (166 aa).

Residues 1–21 form a disordered region; that stretch reads MSDEDHDFSHQGGGDNASKTY. K53 bears the Hypusine mark. The tract at residues 101–121 is disordered; sequence EDPSLPSHLSLMDDEGESRED. Over residues 112-121 the composition is skewed to acidic residues; that stretch reads MDDEGESRED.

This sequence belongs to the eIF-5A family. Lys-53 undergoes hypusination, a unique post-translational modification that consists in the addition of a butylamino group from spermidine to lysine side chain, leading to the formation of the unusual amino acid hypusine. eIF-5As are the only known proteins to undergo this modification, which is essential for their function.

Its subcellular location is the cytoplasm. Its function is as follows. Translation factor that promotes translation elongation and termination, particularly upon ribosome stalling at specific amino acid sequence contexts. Binds between the exit (E) and peptidyl (P) site of the ribosome and promotes rescue of stalled ribosome: specifically required for efficient translation of polyproline-containing peptides as well as other motifs that stall the ribosome. Acts as a ribosome quality control (RQC) cofactor by joining the RQC complex to facilitate peptidyl transfer during CAT tailing step. The protein is Eukaryotic translation initiation factor 5A of Leishmania donovani.